The primary structure comprises 313 residues: Olfactory receptor 1J2 (313 aa).

Over 1–25 the chain is Extracellular; that stretch reads MSPENQSSVSEFLLLGLPIRPEQQA. N-linked (GlcNAc...) asparagine glycosylation occurs at Asn-5. Residues 26–49 form a helical membrane-spanning segment; that stretch reads VFFTLFLGMYLTTVLGNLLIMLLI. At 50-57 the chain is on the cytoplasmic side; sequence QLDSHLHT. A helical membrane pass occupies residues 58-79; sequence PMYFFLSHLALTDISFSSVTVP. Residues 80 to 100 lie on the Extracellular side of the membrane; that stretch reads KMLMDMRTKYKSILYEECISQ. An intrachain disulfide couples Cys-97 to Cys-189. A helical transmembrane segment spans residues 101–120; the sequence is MYFFIFFTDLDSFLITSMAY. Topologically, residues 121–139 are cytoplasmic; sequence DRYVAICHPLHYTVIMREE. The chain crosses the membrane as a helical span at residues 140 to 158; the sequence is LCVFLVAVSWILSCASSLS. Residues 159–196 are Extracellular-facing; sequence HTLLLTRLSFCAANTIPHVFCDLAALLKLSCSDIFLNE. Residues 197–219 form a helical membrane-spanning segment; it reads LVMFTVGVVVITLPFMCILVSYG. The Cytoplasmic segment spans residues 220-236; sequence YIGATILRVPSTKGIHK. A helical transmembrane segment spans residues 237–259; sequence ALSTCGSHLSVVSLYYGSIFGQY. Topologically, residues 260–272 are extracellular; the sequence is LFPTVSSSIDKDV. A helical membrane pass occupies residues 273–292; it reads IVALMYTVVTPMLNPFIYSL. Over 293–313 the chain is Cytoplasmic; the sequence is RNRDMKEALGKLFSRATFFSW.

The protein belongs to the G-protein coupled receptor 1 family.

It localises to the cell membrane. In terms of biological role, odorant receptor. The chain is Olfactory receptor 1J2 (OR1J2) from Homo sapiens (Human).